The following is a 424-amino-acid chain: GTPase Obg (424 aa).

Residues 1–158 (MFIDTAKIFV…RWIKLELKLL (158 aa)) enclose the Obg domain. The OBG-type G domain occupies 159–331 (ADVGLIGFPN…LMKEAARLLS (173 aa)). GTP is bound by residues 165–172 (GFPNVGKS), 190–194 (FTTLK), 212–215 (DIPG), 282–285 (NKSD), and 312–314 (SAA). The Mg(2+) site is built by serine 172 and threonine 192. The region spanning 345–424 (RFIEEEKRFT…LNDFEFDFLL (80 aa)) is the OCT domain.

It belongs to the TRAFAC class OBG-HflX-like GTPase superfamily. OBG GTPase family. Monomer. The cofactor is Mg(2+).

Its subcellular location is the cytoplasm. Functionally, an essential GTPase which binds GTP, GDP and possibly (p)ppGpp with moderate affinity, with high nucleotide exchange rates and a fairly low GTP hydrolysis rate. Plays a role in control of the cell cycle, stress response, ribosome biogenesis and in those bacteria that undergo differentiation, in morphogenesis control. This chain is GTPase Obg, found in Clostridium botulinum (strain ATCC 19397 / Type A).